The sequence spans 536 residues: Glutamate--tRNA ligase, mitochondrial (536 aa).

Residue 48-50 (RFA) coordinates L-glutamate. The 'HIGH' region motif lies at 53-61 (PTGFLHLGS). An ATP-binding site is contributed by His-58. L-glutamate contacts are provided by residues Glu-84, 235–239 (YHLAN), and Arg-253. Residues Glu-256 and 291–295 (KLSKR) contribute to the ATP site. The 'KMSKS' region signature appears at 291–295 (KLSKR).

It belongs to the class-I aminoacyl-tRNA synthetase family. Glutamate--tRNA ligase type 1 subfamily.

It localises to the mitochondrion matrix. It carries out the reaction tRNA(Glu) + L-glutamate + ATP = L-glutamyl-tRNA(Glu) + AMP + diphosphate. Functionally, catalyzes the attachment of glutamate to tRNA(Glu) in a two-step reaction: glutamate is first activated by ATP to form Glu-AMP and then transferred to the acceptor end of tRNA(Glu). The polypeptide is Glutamate--tRNA ligase, mitochondrial (MSE1) (Saccharomyces cerevisiae (strain ATCC 204508 / S288c) (Baker's yeast)).